Reading from the N-terminus, the 315-residue chain is Acetyl-coenzyme A carboxylase carboxyl transferase subunit alpha (315 aa).

The CoA carboxyltransferase C-terminal domain occupies 36–289 (LSKKRLELME…RKAVAAELKI (254 aa)).

This sequence belongs to the AccA family. As to quaternary structure, acetyl-CoA carboxylase is a heterohexamer composed of biotin carboxyl carrier protein (AccB), biotin carboxylase (AccC) and two subunits each of ACCase subunit alpha (AccA) and ACCase subunit beta (AccD).

Its subcellular location is the cytoplasm. It carries out the reaction N(6)-carboxybiotinyl-L-lysyl-[protein] + acetyl-CoA = N(6)-biotinyl-L-lysyl-[protein] + malonyl-CoA. It participates in lipid metabolism; malonyl-CoA biosynthesis; malonyl-CoA from acetyl-CoA: step 1/1. Component of the acetyl coenzyme A carboxylase (ACC) complex. First, biotin carboxylase catalyzes the carboxylation of biotin on its carrier protein (BCCP) and then the CO(2) group is transferred by the carboxyltransferase to acetyl-CoA to form malonyl-CoA. This Francisella tularensis subsp. holarctica (strain FTNF002-00 / FTA) protein is Acetyl-coenzyme A carboxylase carboxyl transferase subunit alpha.